A 43-amino-acid polypeptide reads, in one-letter code: Protein PsbN (43 aa).

Residues 5 to 27 (ALVAISISRLLVSFTGYALYTAF) form a helical membrane-spanning segment.

This sequence belongs to the PsbN family.

The protein localises to the plastid. Its subcellular location is the chloroplast thylakoid membrane. In terms of biological role, may play a role in photosystem I and II biogenesis. This Bowenia serrulata (Byfield fern) protein is Protein PsbN.